Here is a 237-residue protein sequence, read N- to C-terminus: Ribitol-5-phosphate cytidylyltransferase (237 aa).

Residues 7 to 10 (LAGG) and 80 to 86 (GEDRNET) each bind CTP.

This sequence belongs to the IspD/TarI cytidylyltransferase family. TarI subfamily.

It catalyses the reaction D-ribitol 5-phosphate + CTP + H(+) = CDP-L-ribitol + diphosphate. Its pathway is cell wall biogenesis; poly(ribitol phosphate) teichoic acid biosynthesis. Its function is as follows. Catalyzes the transfer of the cytidylyl group of CTP to D-ribitol 5-phosphate. The protein is Ribitol-5-phosphate cytidylyltransferase of Listeria innocua serovar 6a (strain ATCC BAA-680 / CLIP 11262).